We begin with the raw amino-acid sequence, 561 residues long: Long-chain-fatty-acid--CoA ligase (561 aa).

213–224 (YTGGTTGVAKGA) provides a ligand contact to ATP.

This sequence belongs to the ATP-dependent AMP-binding enzyme family. Mg(2+) serves as cofactor.

It localises to the membrane. The catalysed reaction is a long-chain fatty acid + ATP + CoA = a long-chain fatty acyl-CoA + AMP + diphosphate. It functions in the pathway lipid metabolism; fatty acid beta-oxidation. Functionally, catalyzes the esterification, concomitant with transport, of exogenous long-chain fatty acids into metabolically active CoA thioesters for subsequent degradation or incorporation into phospholipids. In Escherichia coli O6:H1 (strain CFT073 / ATCC 700928 / UPEC), this protein is Long-chain-fatty-acid--CoA ligase (fadD).